The following is a 385-amino-acid chain: Zinc finger protein B385R (385 aa).

2 C2H2-type zinc fingers span residues 166–190 and 168–190; these read LQCP…FYNH and CPNC…FYNH.

The protein belongs to the asfivirus B385R family.

This is Zinc finger protein B385R from African swine fever virus (isolate Tick/Malawi/Lil 20-1/1983) (ASFV).